Reading from the N-terminus, the 470-residue chain is L-seryl-tRNA(Sec) selenium transferase (470 aa).

Lys-292 is modified (N6-(pyridoxal phosphate)lysine).

It belongs to the SelA family. Pyridoxal 5'-phosphate serves as cofactor.

Its subcellular location is the cytoplasm. The enzyme catalyses L-seryl-tRNA(Sec) + selenophosphate + H(+) = L-selenocysteinyl-tRNA(Sec) + phosphate. The protein operates within aminoacyl-tRNA biosynthesis; selenocysteinyl-tRNA(Sec) biosynthesis; selenocysteinyl-tRNA(Sec) from L-seryl-tRNA(Sec) (bacterial route): step 1/1. Its function is as follows. Converts seryl-tRNA(Sec) to selenocysteinyl-tRNA(Sec) required for selenoprotein biosynthesis. This is L-seryl-tRNA(Sec) selenium transferase from Moorella thermoacetica (strain ATCC 39073 / JCM 9320).